An 880-amino-acid chain; its full sequence is Leucine--tRNA ligase (880 aa).

The 'HIGH' region motif lies at 46-56 (PYPSGALHMGH). A 'KMSKS' region motif is present at residues 638–642 (KMSKS). Lys641 serves as a coordination point for ATP.

This sequence belongs to the class-I aminoacyl-tRNA synthetase family.

Its subcellular location is the cytoplasm. The catalysed reaction is tRNA(Leu) + L-leucine + ATP = L-leucyl-tRNA(Leu) + AMP + diphosphate. The sequence is that of Leucine--tRNA ligase from Stenotrophomonas maltophilia (strain K279a).